We begin with the raw amino-acid sequence, 197 residues long: 3-isopropylmalate dehydratase small subunit (197 aa).

This sequence belongs to the LeuD family. LeuD type 1 subfamily. As to quaternary structure, heterodimer of LeuC and LeuD.

It carries out the reaction (2R,3S)-3-isopropylmalate = (2S)-2-isopropylmalate. It functions in the pathway amino-acid biosynthesis; L-leucine biosynthesis; L-leucine from 3-methyl-2-oxobutanoate: step 2/4. Catalyzes the isomerization between 2-isopropylmalate and 3-isopropylmalate, via the formation of 2-isopropylmaleate. This chain is 3-isopropylmalate dehydratase small subunit, found in Shouchella clausii (strain KSM-K16) (Alkalihalobacillus clausii).